The following is a 248-amino-acid chain: Probable aquaporin TIP2-1 (248 aa).

A run of 2 helical transmembrane segments spans residues 20–40 and 54–74; these read AYVAEFIATLLFVFAGVGSAI and AGLVAIAIAHALALFVGVSVA. The short motif at 83 to 85 is the NPA 1 element; sequence NPA. A run of 3 helical transmembrane segments spans residues 97–119, 141–161, and 168–188; these read TILTGLFYWIAQLLGASIACLLL, GVVMEIVITFALVYTVYATAA, and LGTIAPIAIGFIVGANILAAG. An NPA 2 motif is present at residues 196–198; sequence NPA. Residues 217–237 form a helical membrane-spanning segment; that stretch reads WVGPLIGGGLAGLVYGDVFIG.

It belongs to the MIP/aquaporin (TC 1.A.8) family. TIP (TC 1.A.8.10) subfamily. In terms of tissue distribution, expressed in roots and anthers.

The protein localises to the vacuole membrane. Functionally, aquaporins facilitate the transport of water and small neutral solutes across cell membranes. May be involved in transport from the vacuolar compartment to the cytoplasm. The sequence is that of Probable aquaporin TIP2-1 (TIP2-1) from Oryza sativa subsp. japonica (Rice).